Consider the following 428-residue polypeptide: Serine--tRNA ligase (428 aa).

An L-serine-binding site is contributed by 231–233 (TAE). Residue 262-264 (RAE) coordinates ATP. E285 contacts L-serine. Residue 349 to 352 (EISS) participates in ATP binding. S385 is an L-serine binding site.

It belongs to the class-II aminoacyl-tRNA synthetase family. Type-1 seryl-tRNA synthetase subfamily. As to quaternary structure, homodimer. The tRNA molecule binds across the dimer.

It localises to the cytoplasm. The enzyme catalyses tRNA(Ser) + L-serine + ATP = L-seryl-tRNA(Ser) + AMP + diphosphate + H(+). The catalysed reaction is tRNA(Sec) + L-serine + ATP = L-seryl-tRNA(Sec) + AMP + diphosphate + H(+). The protein operates within aminoacyl-tRNA biosynthesis; selenocysteinyl-tRNA(Sec) biosynthesis; L-seryl-tRNA(Sec) from L-serine and tRNA(Sec): step 1/1. In terms of biological role, catalyzes the attachment of serine to tRNA(Ser). Is also able to aminoacylate tRNA(Sec) with serine, to form the misacylated tRNA L-seryl-tRNA(Sec), which will be further converted into selenocysteinyl-tRNA(Sec). The polypeptide is Serine--tRNA ligase (Methylorubrum extorquens (strain PA1) (Methylobacterium extorquens)).